The following is a 108-amino-acid chain: MLGKKLHVKKNDTVVVIAGKDKAKTGKVLQILPKKDGILVEGVNITKRHTKPRGSESGSIVEKEAVIHVSNVMIYCSKCDKAVRTRTNTLEDGKKVRVCVKCGEAFDK.

Belongs to the universal ribosomal protein uL24 family. As to quaternary structure, part of the 50S ribosomal subunit.

In terms of biological role, one of two assembly initiator proteins, it binds directly to the 5'-end of the 23S rRNA, where it nucleates assembly of the 50S subunit. One of the proteins that surrounds the polypeptide exit tunnel on the outside of the subunit. The sequence is that of Large ribosomal subunit protein uL24 from Geotalea daltonii (strain DSM 22248 / JCM 15807 / FRC-32) (Geobacter daltonii).